The primary structure comprises 63 residues: Light-harvesting protein B-800/850 alpha chain (63 aa).

Residues Met1 to Val14 lie on the Cytoplasmic side of the membrane. Residues Gly15 to Val35 traverse the membrane as a helical segment. His31 provides a ligand contact to a bacteriochlorophyll. At Leu36–Ser63 the chain is on the periplasmic side.

It belongs to the antenna complex alpha subunit family. In terms of assembly, the core complex is formed by different alpha and beta chains, binding bacteriochlorophyll molecules, and arranged most probably in tetrameric structures disposed around the reaction center. The non-pigmented gamma chains may constitute additional components.

The protein localises to the cell inner membrane. Functionally, antenna complexes are light-harvesting systems, which transfer the excitation energy to the reaction centers. In Rhodovulum sulfidophilum (Rhodobacter sulfidophilus), this protein is Light-harvesting protein B-800/850 alpha chain (pucA).